The following is a 421-amino-acid chain: Serine hydroxymethyltransferase (421 aa).

(6S)-5,6,7,8-tetrahydrofolate is bound by residues leucine 121 and 125-127; that span reads GHL. N6-(pyridoxal phosphate)lysine is present on lysine 229.

The protein belongs to the SHMT family. Homodimer. Requires pyridoxal 5'-phosphate as cofactor.

It localises to the cytoplasm. The enzyme catalyses (6R)-5,10-methylene-5,6,7,8-tetrahydrofolate + glycine + H2O = (6S)-5,6,7,8-tetrahydrofolate + L-serine. The protein operates within one-carbon metabolism; tetrahydrofolate interconversion. It participates in amino-acid biosynthesis; glycine biosynthesis; glycine from L-serine: step 1/1. Functionally, catalyzes the reversible interconversion of serine and glycine with tetrahydrofolate (THF) serving as the one-carbon carrier. This reaction serves as the major source of one-carbon groups required for the biosynthesis of purines, thymidylate, methionine, and other important biomolecules. Also exhibits THF-independent aldolase activity toward beta-hydroxyamino acids, producing glycine and aldehydes, via a retro-aldol mechanism. This Haemophilus influenzae (strain PittGG) protein is Serine hydroxymethyltransferase.